A 1125-amino-acid polypeptide reads, in one-letter code: Telomerase reverse transcriptase (1125 aa).

The interval 1–234 is RNA-interacting domain 1; that stretch reads MPRAPRCRAV…ARRRRSSARG (234 aa). The tract at residues 58–199 is GQ motif; that stretch reads VPWDAQPPPA…RQVGGTRAGF (142 aa). The tract at residues 137 to 141 is required for regulating specificity for telomeric DNA and for processivity for primer elongation; it reads WGLLL. The tract at residues 186-308 is disordered; the sequence is RRPTRQVGGT…WRLSPSEGEP (123 aa). The segment covering 224-243 has biased composition (basic residues); it reads GARRRRSSARGRLPPAKRPR. The Bipartite nuclear localization signal signature appears at 226–244; the sequence is RRRRSSARGRLPPAKRPRR. Position 231 is a phosphoserine; by PKB/AKT1 (Ser-231). Positions 235 to 312 are linker; sequence RLPPAKRPRR…PSEGEPGAGA (78 aa). 2 stretches are compositionally biased toward basic and acidic residues: residues 244–253 and 269–279; these read RGLEPGRDLE and DAAEAKSRKGD. Residues 290–531 form a required for oligomerization region; it reads GERGVGSASW…VPAAEHRQRE (242 aa). The tract at residues 313–543 is RNA-interacting domain 2; that stretch reads CAETKRFLYC…LGRFLHWLMG (231 aa). A TFLY; involved in RNA binding motif is present at residues 316-321; that stretch reads TKRFLY. Positions 364–514 are QFP motif; it reads PRRPRRLPAR…MKVQDCAWLR (151 aa). Residues 385 to 405 form a CP motif region; that stretch reads LGNHARSPYGALLRAHCPLPA. Ser-450 bears the Phosphoserine; by DYRK2 mark. The region spanning 598-928 is the Reverse transcriptase domain; it reads EVRQHQEARP…CLFPWCGLLL (331 aa). Phosphotyrosine; by SRC-type Tyr-kinases is present on Tyr-700. Asp-705, Asp-861, and Asp-862 together coordinate Mg(2+). The tract at residues 907–921 is required for oligomerization; that stretch reads LGGAAPLQLPAHCLF. The segment at 923 to 927 is primer grip sequence; the sequence is WCGLL. Residues 929–1125 are CTE; sequence DTRTLEVHGD…LTADFKTILD (197 aa).

Belongs to the reverse transcriptase family. Telomerase subfamily. Catalytic component of the telomerase holoenzyme complex composed of one molecule of TERT, one molecule of WRAP53/TCAB1, two molecules of H/ACA ribonucleoprotein complex subunits DKC1, NOP10, NHP2 and GAR1, and a telomerase RNA template component (TERC). The telomerase holoenzyme complex is associated with TEP1, SMG6/EST1A and POT1. The molecular chaperone HSP90/P23 complex is required for correct assembly and stabilization of the active telomerase. Interacts directly with HSP90A and PTGES3. Interacts with HSPA1A; the interaction occurs in the absence of TERC and dissociates once the complex has formed. Interacts with RAN; the interaction promotes nuclear export of TERT. Interacts with XPO1. Interacts with PTPN11; the interaction retains TERT in the nucleus. Interacts with NCL (via RRM1 and C-terminal RRM4/Arg/Gly-rich domains); the interaction is important for nucleolar localization of TERT. Interacts with SMARCA4 (via the bromodomain); the interaction regulates Wnt-mediated signaling. Interacts with MCRS1 (isoform MCRS2); the interaction inhibits in vitro telomerase activity. Interacts with PIF1; the interaction has no effect on the elongation activity of TERT. Interacts with PML; the interaction recruits TERT to PML bodies and inhibits telomerase activity. Interacts with GNL3L. Interacts with isoform 1 and isoform 2 of NVL. Interacts with DHX36. Interacts with ATF7. Phosphorylation at Tyr-700 under oxidative stress leads to translocation of TERT to the cytoplasm and reduces its antiapoptotic activity. Dephosphorylated by SHP2/PTPN11 leading to nuclear retention. Phosphorylation at Ser-231 by the AKT pathway promotes nuclear location. Phosphorylation at the G2/M phase at Ser-450 by DYRK2 promotes ubiquitination by the EDVP complex and degradation. Post-translationally, ubiquitinated by the EDVP complex, a E3 ligase complex following phosphorylation at Ser-450 by DYRK2. Ubiquitinated leads to proteasomal degradation.

The protein resides in the nucleus. It is found in the nucleolus. Its subcellular location is the nucleoplasm. It localises to the chromosome. The protein localises to the telomere. The protein resides in the cytoplasm. It is found in the PML body. It catalyses the reaction DNA(n) + a 2'-deoxyribonucleoside 5'-triphosphate = DNA(n+1) + diphosphate. Its function is as follows. Telomerase is a ribonucleoprotein enzyme essential for the replication of chromosome termini in most eukaryotes. Active in progenitor and cancer cells. Inactive, or very low activity, in normal somatic cells. Catalytic component of the teleromerase holoenzyme complex whose main activity is the elongation of telomeres by acting as a reverse transcriptase that adds simple sequence repeats to chromosome ends by copying a template sequence within the RNA component of the enzyme. Catalyzes the RNA-dependent extension of 3'-chromosomal termini with the 6-nucleotide telomeric repeat unit, 5'-TTAGGG-3'. The catalytic cycle involves primer binding, primer extension and release of product once the template boundary has been reached or nascent product translocation followed by further extension. More active on substrates containing 2 or 3 telomeric repeats. Telomerase activity is regulated by a number of factors including telomerase complex-associated proteins, chaperones and polypeptide modifiers. Modulates Wnt signaling. Plays important roles in aging and antiapoptosis. This chain is Telomerase reverse transcriptase (TERT), found in Bos taurus (Bovine).